The following is a 569-amino-acid chain: Lysine--tRNA ligase (569 aa).

Mg(2+) contacts are provided by Glu414 and Glu421.

The protein belongs to the class-II aminoacyl-tRNA synthetase family. Homodimer. It depends on Mg(2+) as a cofactor.

The protein resides in the cytoplasm. It carries out the reaction tRNA(Lys) + L-lysine + ATP = L-lysyl-tRNA(Lys) + AMP + diphosphate. The polypeptide is Lysine--tRNA ligase (Christiangramia forsetii (strain DSM 17595 / CGMCC 1.15422 / KT0803) (Gramella forsetii)).